A 232-amino-acid polypeptide reads, in one-letter code: MGKSWKTAGKVEKAQQKGQIFTKLAREIAVAAKAGGPDPNANARLRMAIDAAKKVSCPNDTIERAIKKGAGLLDDGKVIEELTYEGYGPHGVGVIVECQTDNKHRTAPDMRHAFKSHDGNMGESGSVAWMFERVGLIEGTKEGSFDPDEEAIEAGANEVFADEGTYEFFTAADDLDAVREALTSRGWKVTKGELSYKAKNITELSDEQRKDVEEFLNYLDDMDDTHRVHATI.

This sequence belongs to the TACO1 family.

The protein resides in the cytoplasm. The chain is Probable transcriptional regulatory protein Bd1964 from Bdellovibrio bacteriovorus (strain ATCC 15356 / DSM 50701 / NCIMB 9529 / HD100).